Here is a 496-residue protein sequence, read N- to C-terminus: Probable malate:quinone oxidoreductase (496 aa).

The protein belongs to the MQO family. The cofactor is FAD.

It carries out the reaction (S)-malate + a quinone = a quinol + oxaloacetate. Its pathway is carbohydrate metabolism; tricarboxylic acid cycle; oxaloacetate from (S)-malate (quinone route): step 1/1. In Prochlorococcus marinus (strain MIT 9303), this protein is Probable malate:quinone oxidoreductase.